A 431-amino-acid polypeptide reads, in one-letter code: Islet cell autoantigen 1-like protein (431 aa).

An AH domain is found at 44–247; that stretch reads ASDAELDAKL…TAQMMTQIQE (204 aa). Disordered stretches follow at residues 295–316 and 351–372; these read EEEEEERFEREPAVARALPRDS and CGSPCTGLTSQEPSVGPGSLTS. Over residues 301–316 the composition is skewed to basic and acidic residues; that stretch reads RFEREPAVARALPRDS. A compositionally biased stretch (polar residues) spans 356–372; the sequence is TGLTSQEPSVGPGSLTS.

This is Islet cell autoantigen 1-like protein (Ica1l) from Mus musculus (Mouse).